The following is a 591-amino-acid chain: Metastasis-associated protein MTA3 (591 aa).

One can recognise a BAH domain in the interval 1–147 (MAANMYRVGD…PSVKTLLADK (147 aa)). Positions 148-258 (GEIRVGPKYQ…SAISVLVPLG (111 aa)) constitute an ELM2 domain. Residues 265 to 317 (DEMEEWSASEACLFEEALEKYGKDFNDIRQDFLPWKSLTSIIEYYYMWKTTDR) enclose the SANT domain. A GATA-type; atypical zinc finger spans residues 377–404 (CESCYATQSHQWYSWGPPNMQCRLCATC). The tract at residues 417-456 (PTQSDEEKSPSPTAEDPRARSHMSRQALQGMPVRNTGSPK) is disordered. The segment covering 421–435 (DEEKSPSPTAEDPRA) has biased composition (basic and acidic residues). A phosphoserine mark is found at Ser-425 and Ser-427. Thr-452 carries the phosphothreonine modification. Ser-516 is subject to Phosphoserine.

The protein belongs to the metastasis-associated protein family. Component of the nucleosome remodeling and deacetylase (NuRD) repressor complex, composed of core proteins MTA1, MTA2, MTA3, RBBP4, RBBP7, HDAC1, HDAC2, MBD2, MBD3, and peripherally associated proteins CDK2AP1, CDK2AP2, GATAD2A, GATAD2B, CHD3, CHD4 and CHD5. The exact stoichiometry of the NuRD complex is unknown, and some subunits such as MBD2 and MBD3, GATAD2A and GATAD2B, and CHD3, CHD4 and CHD5 define mutually exclusive NuRD complexes. Interacts with BCL6. Interacts with NACC2. Interacts with PWWP2B. Expressed in heart, brain, spleen, lung, liver and kidney.

It is found in the nucleus. Its subcellular location is the cytoplasm. Functionally, acts as a component of the histone deacetylase NuRD complex which participates in the remodeling of chromatin. Plays a role in maintenance of the normal epithelial architecture through the repression of SNAI1 transcription in a histone deacetylase-dependent manner, and thus the regulation of E-cadherin levels. Contributes to transcriptional repression by BCL6. This chain is Metastasis-associated protein MTA3 (Mta3), found in Mus musculus (Mouse).